Reading from the N-terminus, the 433-residue chain is MGGSDHTKTSSQSTLRSLSDEISSLTDVVAGFLESNGHPERSLNSTDSVRLSDAPEDVEAARRRLVTALHEMTLLTMSPFEAVRDILLEVSSLPALHAISHFEIIDHVPLDGEISYAELARKINVPQRRLTRMLRAAMSRSIFQEPRPGYIAHNSLSAAMVHSKWLRYHAASTMENFLPAAPKFVEQIERFGDRETRCTSPAGIAFNTETDCIQYLLSQPKHQQVLVNLMKHTGEISGMGPQHLTEHYDWPKASDQIIVDVGGASGSVSRAIACGVPSVRFVVQDRADAVRQGESETPSELKDRFTFQEYDFFQTQPVKNADVYFLRWILHDWPDEDAVTILRQVALAMGPTSKMLIAERLVLLPGEGDPWDQKIATSMDMFMMAFNGSERTLEHFQSLIENTGEAIEISRVIRRPNGVQYSLIEVARKDSER.

The disordered stretch occupies residues 36 to 55 (NGHPERSLNSTDSVRLSDAP). Aspartate 285 contacts S-adenosyl-L-methionine. The Proton acceptor role is filled by histidine 331.

Belongs to the class I-like SAM-binding methyltransferase superfamily. Cation-independent O-methyltransferase family. COMT subfamily.

The protein operates within secondary metabolite biosynthesis. Its function is as follows. O-methyltransferase; part of the hps1-dma1 gene cluster that probably mediates the biosynthesis a derivative of cyclopiazonic acid (CPA). The hybrid polyketide synthase-nonribosomal peptide synthetase (PKS-NRPS) nps1 might incorporates acetyl-CoA, malonyl-CoA, and tryptophan (Trp) and utilizes a C-terminal redox-incompetent reductase domain to make and release the tryptophan tetramic acid, cyclo-acetoacetyl-L-tryptophan (c-AATrp), as the first intermediate in the pathway. In addition, the cluster also includes the tryptophan dimethylallyltransferase dma1, the FAD-dependent oxidoreductase toxD, the cytochrome P450 monooxygenase cyp3.1 and the methyltransferase DOTSEDRAFT_139328; the latter 2 being not present in all CPA-producing fungi but involved in additional modifications that occur in biosynthesis the of a range of CPA and CPA-like products. Further studies are required to clarify whether the CPA-like hps1-dma1 cluster is functional or a non-functional relic reflecting evolution of D.septosporum. The polypeptide is Hps1-dma1 cluster O-methyltransferase (Dothistroma septosporum (strain NZE10 / CBS 128990) (Red band needle blight fungus)).